The following is a 349-amino-acid chain: Flap endonuclease 1 (349 aa).

Residues 1-98 (MDLADLVKDV…EELERRRKAK (98 aa)) are N-domain. The Mg(2+) site is built by Asp-27, Asp-80, Glu-152, Glu-154, Asp-173, Asp-175, and Asp-236. An I-domain region spans residues 116 to 258 (ELRKYSQAIL…RALKIIKKYG (143 aa)). The tract at residues 341-349 (RQTGLDRWF) is interaction with PCNA.

Belongs to the XPG/RAD2 endonuclease family. FEN1 subfamily. As to quaternary structure, interacts with PCNA via subunit PCNA1. It depends on Mg(2+) as a cofactor.

Heterotrimeric PCNA stimulates the nuclease activity without altering cleavage specificity. Functionally, structure-specific nuclease with 5'-flap endonuclease and 5'-3' exonuclease activities involved in DNA replication and repair. During DNA replication, cleaves the 5'-overhanging flap structure that is generated by displacement synthesis when DNA polymerase encounters the 5'-end of a downstream Okazaki fragment. Binds the unpaired 3'-DNA end and kinks the DNA to facilitate 5' cleavage specificity. Cleaves one nucleotide into the double-stranded DNA from the junction in flap DNA, leaving a nick for ligation. Also involved in the base excision repair (BER) pathway. Acts as a genome stabilization factor that prevents flaps from equilibrating into structures that lead to duplications and deletions. Also possesses 5'-3' exonuclease activity on nicked or gapped double-stranded DNA. DNA polymerase I, DNA ligase and the flap endonuclease may be constitutively associated with the PCNA heterotrimer forming a scanning complex able to couple DNA synthesis and Okazaki fragment maturation. This is Flap endonuclease 1 from Saccharolobus solfataricus (strain ATCC 35092 / DSM 1617 / JCM 11322 / P2) (Sulfolobus solfataricus).